The sequence spans 296 residues: Bifunctional protein FolD (296 aa).

NADP(+)-binding positions include 168–170 (GRS), T197, and V238.

The protein belongs to the tetrahydrofolate dehydrogenase/cyclohydrolase family. In terms of assembly, homodimer.

It catalyses the reaction (6R)-5,10-methylene-5,6,7,8-tetrahydrofolate + NADP(+) = (6R)-5,10-methenyltetrahydrofolate + NADPH. The catalysed reaction is (6R)-5,10-methenyltetrahydrofolate + H2O = (6R)-10-formyltetrahydrofolate + H(+). It participates in one-carbon metabolism; tetrahydrofolate interconversion. In terms of biological role, catalyzes the oxidation of 5,10-methylenetetrahydrofolate to 5,10-methenyltetrahydrofolate and then the hydrolysis of 5,10-methenyltetrahydrofolate to 10-formyltetrahydrofolate. This chain is Bifunctional protein FolD, found in Desulfotalea psychrophila (strain LSv54 / DSM 12343).